The sequence spans 1405 residues: DNA-directed RNA polymerase subunit beta' (1405 aa).

Zn(2+) contacts are provided by Cys-71, Cys-73, Cys-86, and Cys-89. Asp-462, Asp-464, and Asp-466 together coordinate Mg(2+). Zn(2+) is bound by residues Cys-820, Cys-893, Cys-900, and Cys-903.

Belongs to the RNA polymerase beta' chain family. As to quaternary structure, the RNAP catalytic core consists of 2 alpha, 1 beta, 1 beta' and 1 omega subunit. When a sigma factor is associated with the core the holoenzyme is formed, which can initiate transcription. It depends on Mg(2+) as a cofactor. Requires Zn(2+) as cofactor.

It carries out the reaction RNA(n) + a ribonucleoside 5'-triphosphate = RNA(n+1) + diphosphate. Its function is as follows. DNA-dependent RNA polymerase catalyzes the transcription of DNA into RNA using the four ribonucleoside triphosphates as substrates. The sequence is that of DNA-directed RNA polymerase subunit beta' from Methylorubrum populi (strain ATCC BAA-705 / NCIMB 13946 / BJ001) (Methylobacterium populi).